The primary structure comprises 262 residues: Indole-3-glycerol phosphate synthase (262 aa).

It belongs to the TrpC family.

It carries out the reaction 1-(2-carboxyphenylamino)-1-deoxy-D-ribulose 5-phosphate + H(+) = (1S,2R)-1-C-(indol-3-yl)glycerol 3-phosphate + CO2 + H2O. Its pathway is amino-acid biosynthesis; L-tryptophan biosynthesis; L-tryptophan from chorismate: step 4/5. The sequence is that of Indole-3-glycerol phosphate synthase from Staphylococcus epidermidis (strain ATCC 12228 / FDA PCI 1200).